We begin with the raw amino-acid sequence, 161 residues long: Arachidonate 5-lipoxygenase-activating protein (161 aa).

Residues 1 to 8 (MDQETVGN) are Lumenal-facing. Residues 9–30 (VVLLAIVTLISVVQNGFFAHKV) form a helical membrane-spanning segment. Residues 31–52 (EHESRTQNGRSFQRTGTLAFER) lie on the Cytoplasmic side of the membrane. The chain crosses the membrane as a helical span at residues 53–77 (VYTANQNCVDAYPTFLAVLWSAGLL). The Lumenal segment spans residues 78 to 80 (CSQ). The chain crosses the membrane as a helical span at residues 81-102 (VPAAFAGLMYLLVRQKYFVGYL). The Cytoplasmic portion of the chain corresponds to 103 to 107 (GERTQ). An intramembrane segment occupies 108–115 (STPGYIFG). Residues 116-128 (KRIILFLFLMSVA) traverse the membrane as a helical segment. Residues 129 to 161 (GIFNYYLIFFFGSDFENYIKTVTTTISPLLLIP) lie on the Lumenal side of the membrane.

The protein belongs to the MAPEG family. In terms of assembly, homotrimer. Interacts with LTC4S and ALOX5.

The protein resides in the nucleus membrane. It localises to the endoplasmic reticulum membrane. In terms of biological role, required for leukotriene biosynthesis by ALOX5 (5-lipoxygenase). Anchors ALOX5 to the membrane. Binds arachidonic acid, and could play an essential role in the transfer of arachidonic acid to ALOX5. Binds to MK-886, a compound that blocks the biosynthesis of leukotrienes. In Macaca fascicularis (Crab-eating macaque), this protein is Arachidonate 5-lipoxygenase-activating protein (ALOX5AP).